The primary structure comprises 338 residues: Glycerol-3-phosphate dehydrogenase [NAD(P)+] (338 aa).

The NADPH site is built by Ser-14, Tyr-15, His-35, and Lys-109. Residues Lys-109, Gly-138, and Thr-140 each contribute to the sn-glycerol 3-phosphate site. Ala-142 serves as a coordination point for NADPH. Sn-glycerol 3-phosphate is bound by residues Lys-194, Asp-247, Ser-257, Arg-258, and Asn-259. The active-site Proton acceptor is the Lys-194. Position 258 (Arg-258) interacts with NADPH. NADPH is bound by residues Val-282 and Glu-284.

This sequence belongs to the NAD-dependent glycerol-3-phosphate dehydrogenase family.

It is found in the cytoplasm. The catalysed reaction is sn-glycerol 3-phosphate + NAD(+) = dihydroxyacetone phosphate + NADH + H(+). The enzyme catalyses sn-glycerol 3-phosphate + NADP(+) = dihydroxyacetone phosphate + NADPH + H(+). It functions in the pathway membrane lipid metabolism; glycerophospholipid metabolism. Its function is as follows. Catalyzes the reduction of the glycolytic intermediate dihydroxyacetone phosphate (DHAP) to sn-glycerol 3-phosphate (G3P), the key precursor for phospholipid synthesis. The polypeptide is Glycerol-3-phosphate dehydrogenase [NAD(P)+] (Shewanella baltica (strain OS155 / ATCC BAA-1091)).